The primary structure comprises 439 residues: GTPase Der (439 aa).

2 EngA-type G domains span residues 4–166 (PIVA…PAQD) and 175–350 (IRIA…EEAS). GTP contacts are provided by residues 10–17 (GRPNVGKS), 57–61 (DTGGL), 119–122 (NKVE), 181–188 (GRPNVGKS), 228–232 (DTAGM), and 293–296 (NKWD). Residues 351–435 (KRVATADLNN…PIRFFLRKRE (85 aa)) enclose the KH-like domain.

The protein belongs to the TRAFAC class TrmE-Era-EngA-EngB-Septin-like GTPase superfamily. EngA (Der) GTPase family. In terms of assembly, associates with the 50S ribosomal subunit.

Its function is as follows. GTPase that plays an essential role in the late steps of ribosome biogenesis. The protein is GTPase Der of Desulforamulus reducens (strain ATCC BAA-1160 / DSM 100696 / MI-1) (Desulfotomaculum reducens).